The following is a 351-amino-acid chain: THO complex subunit 3 (351 aa).

Residues 1–20 are disordered; that stretch reads MAVPAAAMGPSALGQSGPGS. An N-acetylalanine modification is found at Ala2. WD repeat units follow at residues 53–94, 97–137, 139–178, 180–221, 222–261, and 264–303; these read AHSA…KENN, GHGD…CIAT, NTKGENINICWSPDGQTIAVGNKDDVVTFIDAKTHRSKAE, QFKF…QSIN, AHPSNCICIKFDPMGKYFATGSADALVSLWDVDELVCVRC, and RLDWPVRTLSFSHDGKMLASASEDHFIDIAEVETGDKLWE.

It belongs to the THOC3 family. In terms of assembly, component of the THO subcomplex, which is composed of THOC1, THOC2, THOC3, THOC5, THOC6 and THOC7. The THO subcomplex interacts with DDX39B to form the THO-DDX39B complex which multimerizes into a 28-subunit tetrameric assembly. Component of the transcription/export (TREX) complex at least composed of ALYREF/THOC4, DDX39B, SARNP/CIP29, CHTOP and the THO subcomplex; in the complex interacts with THOC2. TREX seems to have a dynamic structure involving ATP-dependent remodeling.

The protein resides in the nucleus. Its subcellular location is the nucleus speckle. In terms of biological role, component of the THO subcomplex of the TREX complex which is thought to couple mRNA transcription, processing and nuclear export, and which specifically associates with spliced mRNA and not with unspliced pre-mRNA. Required for efficient export of polyadenylated RNA and spliced mRNA. The THOC1-THOC2-THOC3 core complex alone is sufficient to bind export factor NXF1-NXT1 and promote ATPase activity of DDX39B. TREX is recruited to spliced mRNAs by a transcription-independent mechanism, binds to mRNA upstream of the exon-junction complex (EJC) and is recruited in a splicing- and cap-dependent manner to a region near the 5' end of the mRNA where it functions in mRNA export to the cytoplasm via the TAP/NXF1 pathway. Its function is as follows. (Microbial infection) The TREX complex is essential for the export of Kaposi's sarcoma-associated herpesvirus (KSHV) intronless mRNAs and infectious virus production. This Homo sapiens (Human) protein is THO complex subunit 3 (THOC3).